Consider the following 217-residue polypeptide: L-lactate dehydrogenase B chain (217 aa).

Asn22 provides a ligand contact to NAD(+). Asn22 and Arg53 together coordinate substrate. The active-site Proton acceptor is His77. Position 123 is a phosphotyrosine (Tyr123). Thr132 is a binding site for substrate. Position 212 is an N6-acetyllysine (Lys212).

Belongs to the LDH/MDH superfamily. LDH family. In terms of assembly, homotetramer. Interacts with PTEN upstream reading frame protein MP31; the interaction leads to inhibition of mitochondrial lactate dehydrogenase activity, preventing conversion of lactate to pyruvate in mitochondria.

It localises to the cytoplasm. Its subcellular location is the mitochondrion inner membrane. The enzyme catalyses (S)-lactate + NAD(+) = pyruvate + NADH + H(+). It participates in fermentation; pyruvate fermentation to lactate; (S)-lactate from pyruvate: step 1/1. Interconverts simultaneously and stereospecifically pyruvate and lactate with concomitant interconversion of NADH and NAD(+). This is L-lactate dehydrogenase B chain (LDHB) from Oryctolagus cuniculus (Rabbit).